Reading from the N-terminus, the 66-residue chain is Large ribosomal subunit protein eL24 (66 aa).

Zn(2+) is bound by residues C7, C10, C33, and C37. A C4-type zinc finger spans residues 7-37 (CSYCGKPFEPGTGKMYVRNDGRVLFFCSRKC).

Belongs to the eukaryotic ribosomal protein eL24 family. As to quaternary structure, part of the 50S ribosomal subunit. Forms a cluster with proteins L3 and L14. The cofactor is Zn(2+).

In terms of biological role, binds to the 23S rRNA. In Pyrococcus furiosus (strain ATCC 43587 / DSM 3638 / JCM 8422 / Vc1), this protein is Large ribosomal subunit protein eL24.